We begin with the raw amino-acid sequence, 4450 residues long: MSTFKKEHVQDMYRLSPMQEGMLFHALLDKDKNAHLVQMSIAIEGIVDVELLSESLNILIDRYDVFRTTFLHEKIKQPLQVVLKERPVQLQFKDISSLDEEKREQAIEQYKYQDGETVFDLTRDPLMRVAIFQTGKVNYQMIWSFHHILMDGWCFNIIFNDLFNIYLSLKEKKPLQLEAVQPYKQFIKWLEKQDKQEALRYWKEHLMNYDQSVTLPKKKAAINNTTYEPAQFRFAFDKVLTQQLLRIANQSQVTLNIVFQTIWGIVLQKYNSTNDVVYGSVVSGRPSEISGIEKMVGLFINTLPLRIQTQKDQSFIELVKTVHQNVLFSQQHEYFPLYEIQNHTELKQNLIDHIMVIENYPLVEELQKNSIMQKVGFTVRDVKMFEPTNYDMTVMVLPRDEISVRLDYNAAVYDIDFIRKIEGHMKEVALCVANNPHVLVQDVPLLTKQEKQHLLVELHDSITEYPDKTIHQLFTEQVEKTPEHVAVVFEDEKVTYRELHERSNQLARFLREKGVKKESIIGIMMERSVEMIVGILGILKAGGAFVPIDPEYPKERIGYMLDSVRLVLTQRHLKDKFAFTKETIVIEDPSISHELTEEIDYINESEDLFYIIYTSGTTGKPKGVMLEHKNIVNLLHFTFEKTNINFSDKVLQYTTCSFDVCYQEIFSTLLSGGQLYLIRKETQRDVEQLFDLVKRENIEVLSFPVAFLKFIFNEREFINRFPTCVKHIITAGEQLVVNNEFKRYLHEHNVHLHNHYGPSETHVVTTYTINPEAEIPELPPIGKPISNTWIYILDQEQQLQPQGIVGELYISGANVGRGYLNNQELTAEKFFADPFRPNERMYRTGDLARWLPDGNIEFLGRADHQVKIRGHRIELGEIEAQLLNCKGVKEAVVIDKADDKGGKYLCAYVVMEVEVNDSELREYLGKALPDYMIPSFFVPLDQLPLTPNGKIDRKSLPNLEGIVNTNAKYVVPTNELEEKLAKIWEEVLGISQIGIQDNFFSLGGHSLKAITLISRMNKECNVDIPLRLLFEAPTIQEISNYINGAKKESYVAIQPVPEQEYYPVSSVQKRMFILNEFDRSGTAYNLPGVMFLDGKLNYRQLEAAVKKLVERHEALRTSFHSINGEPVQRVHQNVELQIAYSESTEDQVERIIAEFMQPFALEVAPLLRVGLVKLEAERHLFIMDMHHIISDGVSMQIMIQEIADLYKEKELPTLGIQYKDFTVWHNRLLQSDVIEKQEAYWLNVFTEEIPVLNLPTDYPRPTIQSFDGKRFTFSTGKQLMDDLYKVATETGTTLYMVLLAAYNVFLSKYSGQDDIVVGTPIAGRSHADVENMLGMFVNTLAIRSRLNNEDTFKDFLANVKQTALHAYENPDYPFDTLVEKLGIQRDLSRNPLFDTMFVLQNTDRKSFEVEQITITPYVPNSRHSKFDLTLEVSEEQNEILLCLEYCTKLFTDKTVERMAGHFLQILHAIVGNPTIIISEIEILSEEEKQHILFEFNDTKTTYPHMQTIQGLFEEQVEKTPDHVAVGWKDQALTYRELNERANQVARVLRQKGVQPDNIVGLLVERSPEMLVGIMGILKAGGAYLPLDPEYPADRISYMIQDCGVRIMLTQQHLLSLVHDEFDCVILDEDSLYKGDSSNLAPVNQAGDLAYIMYTSGSTGKPKGVMVEHRNVIRLVKNTNYVQVREDDRIIQTGAIGFDALTFEVFGSLLHGAELYPVTKDVLLDAEKLHKFLQANQITIMWLTSPLFNQLSQGTEEMFAGLRSLIVGGDALSPKHINNVKRKCPNLTMWNGYGPTENTTFSTCFLIDKEYDDNIPIGKAISNSTVYIMDRYGQLQPVGVPGELCVGGDGVARGYMNQPALTEEKFVPNPFAPGERMYRTGDLARWLPDGTIEYLGRIDQQVKIRGYRIEPGEIETLLVKHKKVKESVIMVVEDNNGQKALCAYYVPEEEVTVSELREYIAKELPVYMVPAYFVQIEQMPLTQNGKVNRSALPKPDGEFGTATEYVAPSSDIEMKLAEIWHNVLGVNKIGVLDNFFELGGHSLRAMTMISQVHKEFDVELPLKVLFETPTISALAQYIADGEKGMYLAIQPVTPQDYYPVSSAQKRMYILYEFEGAGITYNVPNVMFIEGKLDYQRFEYAIKSLINRHEALRTSFYSLNGEPVQRVHQNVELQIAYSEAKEDEIEQIVESFVQPFDLEIAPALRVGLVKLASDRHLFLMDMHHIISDGVSMQIITKEIADLYKGKELAELHIQYKDFAVWQNEWFQSAALEKQKTYWLNTFAEDIPVLNLSTDYPRPTIQSFEGDIVTFSAGKQLAEELKRLATETGTTLYMLLLAAYNVLLHKYSGQEEIVVGTPIAGRSHADVENIVGMFVNTLALKNTPIAVRTFHEFLLEVKQNALEAFENQDYPFENLIEKLQVRRDLSRNPLFDTMFSLSNIDEQVEIGIEGLSFSPYEMQYWIAKFDISFDILEKQDDIQFYFNYCTNLFKKETIERLATHFMHILQEIVINPEIKLCEINMLSEEEQQRVLYDFNGTDATYATNKIFHELFEEQVEKTPDHIAVIDEREKLSYQELNAKANQLARVLRQKGVQPNSMVGIMVDRSLDMIVGMLGVLKAGGAYVPIDIDYPQERISYMMEDSGAALLLTQQKLTQQIAFSGDILYLDQEEWLHEEASNLEPIARPQDIAYIIYTSGTTGKPKGVMIEHQSYVNVAMAWKDAYRLDTFPVRLLQMASFAFDVSAGDFARALLTGGQLIVCPNEVKMDPASLYAIIKKYDITIFEATPALVIPLMEYIYEQKLDISQLQILIVGSDSCSMEDFKTLVSRFGSTIRIVNSYGVTEACIDSSYYEQPLSSLHVTGTVPIGKPYANMKMYIMNQYLQIQPVGVIGELCIGGAGVARGYLNRPDLTAEKFVPNPFVPGEKLYRTGDLARWMPDGNVEFLGRNDHQVKIRGIRIELGEIEAQLRKHDSIKEATVIAREDHMKEKYLCAYMVTEGEVNVAELRAYLATDLPAAMIPSYFVSLEAMPLTANGKIDKRSLPEPDGSISIGTEYVAPRTMLEGKLEEIWKDVLGLQRVGIHDDFFTIGGHSLKAMAVISQVHKECQTEVPLRVLFETPTIQGLAKYIEETDTEQYMAIQPVSGQDYYPVSSAQKRMFIVNQFDGVGISYNMPSIMLIEGKLERTRLESAFKRLIERHESLRTSFEIINGKPVQKIHEEADFNMSYQVASNEQVEKMIDEFIQPFDLSVAPLLRVELLKLEEDRHVLIFDMHHIISDGISSNILMKELGELYQGNALPELRIQYKDFAVWQNEWFQSEAFKKQEEYWVNVFADERPILDIPTDYPRPMQQSFDGAQLTFGTGKQLMDGLYRVATETGTTLYMVLLAAYNVLLSKYSGQEDIIVGTPIVGRSHTDLENIVGMFVNTLAMRNKPEGEKTFKAFVSEIKQNALAAFENQDYPFEELIEKLEIQRDLSRNPLFDTLFSLQNIGEESFELAELTCKPFDLVSKLEHAKFDLSLVAVEKEEEIAFGLQYCTKLYKEKTVEQLAQHFIQIVKAIVENPDVKLSDIDMLSEEEKKQIMLEFNDTKIQYPQNQTIQELFEEQVKKTPEHIAIVWEGQALTYHELNIKANQLARVLREKGVTPNHPVAIMTERSLEMIVGIFSILKAGGAYVPIDPAYPQERIQYLLEDSGATLLLTQSHVLNKLPVDIEWLDLTDEQNYVEDGTNLPFMNQSTDLAYIIYTSGTTGKPKGVMIEHQSIINCLQWRKEEYEFGPGDTALQVFSFAFDGFVASLFAPILAGATSVLPKEEEAKDPVALKKLIASEEITHYYGVPSLFSAILDVSSSKDLQNLRCVTLGGEKLPAQIVKKIKEKNKEIEVNNEYGPTENSVVTTIMRDIQVEQEITIGCPLSNVDVYIVNCNHQLQPVGVVGELCIGGQGLARGYLNKPELTADKFVVNPFVPGERMYKTGDLAKWRSDGMIEYVGRVDEQVKVRGYRIELGEIESAILEYEKIKEAVVIVSEHTASEQMLCAYIVGEEDVLTLDLRSYLAKLLPSYMIPNYFIQLDSIPLTPNGKVDRKALPEPQTIGLMAREYVAPRNEIEAQLVLIWQEVLGIELIGITDNFFELGGHSLKATLLVAKIYEYMQIEMPLNVVFKHSTIMKIAEYITHQESENNVHQPILVNVEADREALSLNGEKQRKNIELPILLNEETDRNVFLFAPIGAQGVFYKKLAEQIPTASLYGFDFIEDDDRIQQYIESMIQTQSDGQYVLIGYSSGGNLAFEVAKEMERQGYSVSDLVLFDVYWKGKVFEQTKEEEEENIKIIMEELRENPGMFNMTREDFELYFANEFVKQSFTRKMRKYMSFYTQLVNYGEVEATIHLIQAEFEEEKIDENEKADEEEKTYLEEKWNEKAWNKAAKRFVKYNGYGAHSNMLGGDGLERNSSILKQILQGTFVVK.

Residues 467 to 1044 form a domain 1 (proline-activating) region; that stretch reads DKTIHQLFTE…IQEISNYING (578 aa). Carrier domains lie at 971 to 1046, 2006 to 2081, 3051 to 3126, and 4089 to 4164; these read VPTN…NGAK, APSS…ADGE, APRT…EETD, and APRN…THQE. Residues Ser-1006, Ser-2041, Ser-3086, and Ser-4124 each carry the O-(pantetheine 4'-phosphoryl)serine modification. Residues 1521-2080 form a domain 2 (valine-activating) region; that stretch reads DHVAVGWKDQ…SALAQYIADG (560 aa). The tract at residues 2538-3134 is domain 3 (ornithine-activating); that stretch reads YATNKIFHEL…TDTEQYMAIQ (597 aa). The domain 4 (leucine-activating) stretch occupies residues 3590–4172; sequence IQELFEEQVK…QESENNVHQP (583 aa).

Belongs to the ATP-dependent AMP-binding enzyme family. Large multienzyme complex of GrsA and GrsB. The cofactor is pantetheine 4'-phosphate.

It functions in the pathway antibiotic biosynthesis; gramicidin S biosynthesis. In terms of biological role, this protein is a multifunctional enzyme, able to activate and polymerize the amino acids Pro, Val, Orn and Leu. Activation sites for these AA consist of individual domains. This chain is Gramicidin S synthase 2 (grsB), found in Brevibacillus brevis (Bacillus brevis).